A 350-amino-acid chain; its full sequence is Integrin beta-1-binding protein 2 (350 aa).

Zn(2+) is bound by residues cysteine 5, cysteine 10, cysteine 24, and histidine 27. The CHORD 1 domain occupies 5–64; it reads CYNKGCGQHFDPNTNLPDSCRYHPGVPIFHDALKGWSCCRKRTVDFSEFLNIKGCTVGLH. An SH3-binding motif is present at residues 28-31; that stretch reads PGVP. Residues cysteine 42, cysteine 43, cysteine 59, and histidine 64 each coordinate Zn(2+). The SH3-binding motif lies at 70–79; sequence PEVPPQPEGP. A disordered region spans residues 72–92; that stretch reads VPPQPEGPATSSLQEQKPLNT. A compositionally biased stretch (polar residues) spans 80–92; the sequence is ATSSLQEQKPLNT. Positions 150 and 155 each coordinate Zn(2+). Residues 150 to 209 form the CHORD 2 domain; that stretch reads CQNPGCDAVYQGPESDATPCTYHPGAPRFHEGMKSWSCCGIQTLDFGAFLAQPGCRVGRH. Positions 159–162 match the SH2-binding motif; it reads YQGP. Residues cysteine 169 and histidine 172 each coordinate Zn(2+). Residues 173–176 carry the SH3-binding motif; sequence PGAP. Residues cysteine 187, cysteine 188, cysteine 204, and histidine 209 each coordinate Zn(2+). The region spanning 216–305 is the CS domain; the sequence is PASCRHDWHQ…ADPGSWAQLE (90 aa). Residues 235 to 238 carry the SH2-binding motif; that stretch reads YGQI. The tract at residues 317-350 is disordered; the sequence is GVLLEMDEEESEDSDDDLSWTEEEDEEEEEAMGE. A compositionally biased stretch (acidic residues) spans 321-350; the sequence is EMDEEESEDSDDDLSWTEEEDEEEEEAMGE.

As to quaternary structure, interacts with beta-1 integrin subunit. This interaction is regulated by divalent cations, and it occurs only in absence of calcium. As to expression, expressed in skeletal and cardiac muscles but not in other tissues. Is localized in rows flanking the Z line containing alpha-actinin.

Functionally, may play a role during maturation and/or organization of muscles cells. In Mus musculus (Mouse), this protein is Integrin beta-1-binding protein 2 (Itgb1bp2).